Reading from the N-terminus, the 309-residue chain is UDP-3-O-acyl-N-acetylglucosamine deacetylase (309 aa).

3 residues coordinate Zn(2+): His78, His237, and Asp241. The active-site Proton donor is His264.

The protein belongs to the LpxC family. The cofactor is Zn(2+).

It catalyses the reaction a UDP-3-O-[(3R)-3-hydroxyacyl]-N-acetyl-alpha-D-glucosamine + H2O = a UDP-3-O-[(3R)-3-hydroxyacyl]-alpha-D-glucosamine + acetate. Its pathway is glycolipid biosynthesis; lipid IV(A) biosynthesis; lipid IV(A) from (3R)-3-hydroxytetradecanoyl-[acyl-carrier-protein] and UDP-N-acetyl-alpha-D-glucosamine: step 2/6. In terms of biological role, catalyzes the hydrolysis of UDP-3-O-myristoyl-N-acetylglucosamine to form UDP-3-O-myristoylglucosamine and acetate, the committed step in lipid A biosynthesis. The sequence is that of UDP-3-O-acyl-N-acetylglucosamine deacetylase from Methylobacillus flagellatus (strain ATCC 51484 / DSM 6875 / VKM B-1610 / KT).